A 397-amino-acid chain; its full sequence is Lysophospholipid transporter LplT (397 aa).

Transmembrane regions (helical) follow at residues M16–A36, V53–A73, L91–I111, L139–A159, L164–I184, L227–L247, A253–A273, T281–V301, L305–P325, N352–P372, and V373–W393.

Belongs to the major facilitator superfamily. LplT (TC 2.A.1.42) family.

Its subcellular location is the cell inner membrane. Its function is as follows. Catalyzes the facilitated diffusion of 2-acyl-glycero-3-phosphoethanolamine (2-acyl-GPE) into the cell. The sequence is that of Lysophospholipid transporter LplT from Klebsiella pneumoniae (strain 342).